Here is a 559-residue protein sequence, read N- to C-terminus: Urocanate hydratase (559 aa).

Residues 53–54, Gln-131, 177–179, Glu-197, Arg-202, 243–244, 264–268, 274–275, and Tyr-323 contribute to the NAD(+) site; these read GG, GMG, NA, QTSAH, and YL. Cys-411 is an active-site residue. NAD(+) is bound at residue Gly-493.

This sequence belongs to the urocanase family. NAD(+) is required as a cofactor.

The protein localises to the cytoplasm. It carries out the reaction 4-imidazolone-5-propanoate = trans-urocanate + H2O. Its pathway is amino-acid degradation; L-histidine degradation into L-glutamate; N-formimidoyl-L-glutamate from L-histidine: step 2/3. Catalyzes the conversion of urocanate to 4-imidazolone-5-propionate. This chain is Urocanate hydratase, found in Pseudomonas paraeruginosa (strain DSM 24068 / PA7) (Pseudomonas aeruginosa (strain PA7)).